The following is a 319-amino-acid chain: Ribonucleoside-diphosphate reductase 2 subunit beta (319 aa).

Aspartate 67, glutamate 98, and histidine 101 together coordinate Fe cation. Tyrosine 105 is an active-site residue. Residues glutamate 158, glutamate 192, and histidine 195 each coordinate Fe cation.

It belongs to the ribonucleoside diphosphate reductase small chain family. As to quaternary structure, tetramer of two alpha and two beta subunits. The cofactor is Fe cation.

The enzyme catalyses a 2'-deoxyribonucleoside 5'-diphosphate + [thioredoxin]-disulfide + H2O = a ribonucleoside 5'-diphosphate + [thioredoxin]-dithiol. In terms of biological role, provides the precursors necessary for DNA synthesis. Catalyzes the biosynthesis of deoxyribonucleotides from the corresponding ribonucleotides. R2F contains the tyrosyl radical required for catalysis. The chain is Ribonucleoside-diphosphate reductase 2 subunit beta (nrdF) from Salmonella typhimurium (strain LT2 / SGSC1412 / ATCC 700720).